Consider the following 256-residue polypeptide: Probable ribosomal RNA small subunit methyltransferase A (256 aa).

S-adenosyl-L-methionine is bound by residues His8, Leu10, Gly34, Glu55, Asp83, and Asn98.

It belongs to the class I-like SAM-binding methyltransferase superfamily. rRNA adenine N(6)-methyltransferase family. RsmA subfamily.

The protein resides in the cytoplasm. Functionally, specifically dimethylates two adjacent adenosines in the loop of a conserved hairpin near the 3'-end of 16S rRNA in the 30S particle. May play a critical role in biogenesis of 30S subunits. This chain is Probable ribosomal RNA small subunit methyltransferase A, found in Methanospirillum hungatei JF-1 (strain ATCC 27890 / DSM 864 / NBRC 100397 / JF-1).